The chain runs to 335 residues: Fimbrial adhesin PapGI (335 aa).

Residues M1 to A21 form the signal peptide.

It belongs to the adhesin PapG family. Interacts with chaperone PapD. Assembly of the P pilus requires periplasmic chaperone PapD, in absence of the chaperone overexpression of this subunit is toxic, where the protein accumulates in the periplasm. PapD stimulates release of PapG from an inner membrane-associated form (where at least 1 disulfide bond can form) into the periplasm and also helps it achieve its correct digalactoside-binding conformation. Contains disulfide bonds.

It is found in the secreted. The protein resides in the fimbrium. Its function is as follows. Tip adhesin component of type P pili that binds preferentially to host cell glycosphingolipids such as globotriaosylceramide. The chain is Fimbrial adhesin PapGI from Escherichia coli.